The primary structure comprises 154 residues: Endoribonuclease YbeY (154 aa).

Zn(2+) is bound by residues histidine 113, histidine 117, and histidine 123.

The protein belongs to the endoribonuclease YbeY family. Zn(2+) is required as a cofactor.

It localises to the cytoplasm. Its function is as follows. Single strand-specific metallo-endoribonuclease involved in late-stage 70S ribosome quality control and in maturation of the 3' terminus of the 16S rRNA. The sequence is that of Endoribonuclease YbeY from Vibrio parahaemolyticus serotype O3:K6 (strain RIMD 2210633).